Consider the following 253-residue polypeptide: Sec-independent protein translocase protein TatC (253 aa).

Helical transmembrane passes span 18-38 (VSVGTILVAFLGCFHFWKSIF), 69-89 (AIVISMPIIFWQLWLFIAPGL), 96-116 (VILPFVFFGSGMFLIGAAFSY), 151-171 (LILGFGVAFELPVLAYFLAKV), 187-207 (IVVIFIVAAIITPPDVVSQIF), and 208-228 (MALPLVGLYGLSILIAKMVNP). Positions 231–253 (KDNENNNENNNENNTKENTKSES) are disordered. The segment covering 244-253 (NTKENTKSES) has biased composition (basic and acidic residues).

It belongs to the TatC family. In terms of assembly, the Tat system comprises two distinct complexes: a TatABC complex, containing multiple copies of TatA, TatB and TatC subunits, and a separate TatA complex, containing only TatA subunits. Substrates initially bind to the TatABC complex, which probably triggers association of the separate TatA complex to form the active translocon.

The protein localises to the cell inner membrane. Its function is as follows. Part of the twin-arginine translocation (Tat) system that transports large folded proteins containing a characteristic twin-arginine motif in their signal peptide across membranes. Together with TatB, TatC is part of a receptor directly interacting with Tat signal peptides. The chain is Sec-independent protein translocase protein TatC from Helicobacter pylori (strain ATCC 700392 / 26695) (Campylobacter pylori).